Here is a 338-residue protein sequence, read N- to C-terminus: (-)-alpha-amorphene synthase ((2E,6E)-farnesyl diphosphate cyclizing) (338 aa).

Mg(2+)-binding residues include aspartate 105 and glutamate 109. The short motif at 105 to 109 (DDRAE) is the DDXXE motif element. Arginine 196 lines the substrate pocket. A Mg(2+)-binding site is contributed by serine 246. Lysine 249 provides a ligand contact to substrate. Residue glutamate 250 coordinates Mg(2+). 327–328 (RY) lines the substrate pocket.

Belongs to the terpene synthase family. Mg(2+) is required as a cofactor.

It carries out the reaction (2E,6E)-farnesyl diphosphate = (-)-alpha-amorphene + diphosphate. The protein operates within secondary metabolite biosynthesis; terpenoid biosynthesis. Catalyzes the conversion of (2E,6E)-farnesyl diphosphate (FPP) to yield the bicyclic sesquiterpene (1R,6S,7S)-(-)-alpha-amorphene via a probable 1,6-cyclization, which could involve the abstraction of the pyrophosphate from FPP to yield a (R)-bisabolyl cation. The only accepted substrate is (2E,6E)-farnesyl diphosphate (FPP). In Streptomyces viridochromogenes (strain DSM 40736 / JCM 4977 / BCRC 1201 / Tue 494), this protein is (-)-alpha-amorphene synthase ((2E,6E)-farnesyl diphosphate cyclizing).